An 81-amino-acid chain; its full sequence is Photosystem I iron-sulfur center (81 aa).

4Fe-4S ferredoxin-type domains follow at residues 2-31 (SHAVKIYDTCIGCTQCVRACPLDVLEMVPW) and 37-68 (GQIASSPRTEDCVGCKRCETACPTDFLSIRVY). [4Fe-4S] cluster is bound by residues Cys-11, Cys-14, Cys-17, Cys-21, Cys-48, Cys-51, Cys-54, and Cys-58.

The cyanobacterial PSI reaction center is composed of one copy each of PsaA,B,C,D,E,F,I,J,K,L,M and X, and forms trimeric complexes. [4Fe-4S] cluster is required as a cofactor.

It is found in the cellular thylakoid membrane. The enzyme catalyses reduced [plastocyanin] + hnu + oxidized [2Fe-2S]-[ferredoxin] = oxidized [plastocyanin] + reduced [2Fe-2S]-[ferredoxin]. In terms of biological role, apoprotein for the two 4Fe-4S centers FA and FB of photosystem I (PSI); essential for photochemical activity. FB is the terminal electron acceptor of PSI, donating electrons to ferredoxin. The C-terminus interacts with PsaA/B/D and helps assemble the protein into the PSI complex. Required for binding of PsaD and PsaE to PSI. PSI is a plastocyanin/cytochrome c6-ferredoxin oxidoreductase, converting photonic excitation into a charge separation, which transfers an electron from the donor P700 chlorophyll pair to the spectroscopically characterized acceptors A0, A1, FX, FA and FB in turn. This Synechococcus sp. (strain WH7803) protein is Photosystem I iron-sulfur center.